Consider the following 507-residue polypeptide: UDP-N-acetylhexosamine pyrophosphorylase-like protein 1 (507 aa).

The Substrate binding signature appears at 111–114 (LAGG). Residues 111–114 (LAGG), lysine 125, glutamine 199, and glycine 225 contribute to the UTP site. Position 226 (asparagine 226) interacts with substrate. Residue aspartate 256 coordinates UTP. The Substrate binding signature appears at 306–307 (EY). Lysine 380 is a UTP binding site. Lysine 410 contacts substrate.

The protein belongs to the UDPGP type 1 family.

This Mus musculus (Mouse) protein is UDP-N-acetylhexosamine pyrophosphorylase-like protein 1 (Uap1l1).